The primary structure comprises 298 residues: Lysozyme-like protein 1 (298 aa).

The first 16 residues, 1–16 (MLKLAFVTFLFALASA), serve as a signal peptide directing secretion. In terms of domain architecture, Ch-type lysozyme spans 59–277 (YAYAVDISVP…AAASSKNTDF (219 aa)).

It belongs to the glycosyl hydrolase 25 family. In terms of tissue distribution, expressed in intestine, IL2 and IL6 neurons and some neurons in the head ganglia.

The protein localises to the cytoplasmic vesicle lumen. In terms of biological role, involved in resistance to Gram-negative bacterium S.marcescens and to bacterium Gram-positive S.aureus infection. The protein is Lysozyme-like protein 1 of Caenorhabditis elegans.